The primary structure comprises 692 residues: Furin-like protease kpc-1 (692 aa).

Residues 1 to 33 (MSNISWYRHCSVRLQLVTLALFLLLGSASLGSA) form the signal peptide. A glycan (N-linked (GlcNAc...) asparagine) is linked at N3. A propeptide spanning residues 34–139 (HIDEEFEDDV…QQVAKRRVKR (106 aa)) is cleaved from the precursor. Over 140–670 (GYRRIRRHTD…RSVQMEATSS (531 aa)) the chain is Lumenal. A disordered region spans residues 152–177 (DIFEEDDDGTQISKSRNRKHPDPNDP). Position 176 (D176) interacts with Ca(2+). The 322-residue stretch at 182–503 (MWYLNRGEHH…YGLMDAGAMV (322 aa)) folds into the Peptidase S8 domain. D221 (charge relay system) is an active-site residue. Residue D222 participates in substrate binding. Residues D230, D242, D247, and D249 each contribute to the Ca(2+) site. The disordered stretch occupies residues 230 to 249 (DISPNYDERASYDVNDRDND). Residue 259 to 260 (EN) coordinates substrate. Catalysis depends on H262, which acts as the Charge relay system. Residue I273 participates in Ca(2+) binding. N275 carries an N-linked (GlcNAc...) asparagine glycan. N276, L278, and I280 together coordinate Ca(2+). Disulfide bonds link C279-C428 and C371-C401. Substrate-binding positions include E304, 321 to 326 (SWGPDD), D332, and 360 to 363 (ASGN). Residue D326 coordinates Ca(2+). D369 is a Ca(2+) binding site. Residues D374 and Y376 each coordinate substrate. Residue E399 coordinates Ca(2+). S436 acts as the Charge relay system in catalysis. Position 436 (S436) interacts with substrate. N-linked (GlcNAc...) asparagine glycans are attached at residues N455 and N487. Residues 512–646 (VDEQHRCRQF…ELVLYGTDRE (135 aa)) enclose the P/Homo B domain. The cysteines at positions 518 and 544 are disulfide-linked. Residues 570–572 (RGD) carry the Cell attachment site motif. Residues 671–692 (GTQYSIFHVITLVILTFSQILY) traverse the membrane as a helical segment.

It belongs to the peptidase S8 family. Furin subfamily. In terms of assembly, interacts (via extracellular domain) with receptor dma-1 (via extracellular domain); the interaction promotes dma-1 internalization. Requires Ca(2+) as cofactor. As to expression, expressed in the nervous system including the ventral nerve cord, the nerve ring and the retrovesicular ganglion, and in epithelial cells. Expressed in IL2 neurons. Expressed in PVD mechanosensory neurons. Expressed in pharynx with strong expression in the g2 pharyngeal gland cells and vpi pharyngeal intestinal valve cells. Expressed in intestine.

Its subcellular location is the cell membrane. It localises to the perikaryon. The protein resides in the cell projection. The protein localises to the axon. Functionally, furin-like protease which cleaves proproteins at the RX(K/R)R consensus motif. During neuronal development, regulates the formation and extension of dendrite branches and cellular positioning of various type of neurons. Together with chin-1 and cdc-42, plays a role in the development of the neuropil and is required for the guidance of axons from neurons, including SubL pioneer neurons and AIY interneurons, into the nerve ring. Its role in axon guidance in glia and pioneer neurons may be through ensuring the fmi-1 protein is correctly localized to the nerve ring. Promotes the formation, extension and self-avoidance of dendritic branches of PVD and FLP mechanosensory neurons. In PVD neurons, regulates plasma membrane levels of branching receptor dma-1 by targeting it to late endosomes and thus promotes normal dendrite branching and dendrite self-avoidance. Also controls dendrite extension in AIY and D-type motoneurons, dendrite branching in AQR sensory neurons and VC4/5 motoneurons, the normal number of dendritic branches in AVL neurons and the positioning of HSN and ALM/PLM neurons. Dispensable for maintaining dendrite branching in adults. Also regulates dauer-specific dendritic branching of IL2 neurons and dauer-specific nictation behavior. Under adverse environmental conditions, may promote dauer formation by processing insulin-like proteins ins-1 and ins-18, two daf-2/InsR antagonists. In Caenorhabditis elegans, this protein is Furin-like protease kpc-1.